Reading from the N-terminus, the 525-residue chain is Adenosine deaminase AGSA (525 aa).

The N-terminal stretch at Met-1–Ala-25 is a signal peptide. Residue Asn-81 is glycosylated (N-linked (GlcNAc...) asparagine). Zn(2+) is bound by residues His-117 and His-119. Asp-120 serves as a coordination point for substrate. A glycan (N-linked (GlcNAc...) asparagine) is linked at Asn-132. A disulfide bridge links Cys-142 with Cys-163. Residue Asn-188 is glycosylated (N-linked (GlcNAc...) asparagine). Substrate is bound by residues Trp-207–Phe-214 and Gly-329. The N-linked (GlcNAc...) asparagine glycan is linked to Asn-334. Position 361 (His-361) interacts with Zn(2+). Catalysis depends on Glu-364, which acts as the Proton donor. His-389 functions as the Proton acceptor in the catalytic mechanism. A Zn(2+)-binding site is contributed by Asp-446. Asp-447 is a substrate binding site.

It belongs to the metallo-dependent hydrolases superfamily. Adenosine and AMP deaminases family. ADGF subfamily. The cofactor is Zn(2+). As to expression, detected in egg cordons and in the developing central nervous system. Not detected in adult central nervous system (at protein level). Atrial gland.

It is found in the secreted. The enzyme catalyses adenosine + H2O + H(+) = inosine + NH4(+). Functionally, adenosine deaminase that may contribute to the degradation of extracellular adenosine, a signaling molecule that controls a variety of cellular responses. May play a role in the regulation of cell proliferation. This is Adenosine deaminase AGSA from Aplysia californica (California sea hare).